A 175-amino-acid polypeptide reads, in one-letter code: Lactobacillus up-regulated protein (175 aa).

The first 18 residues, Met-1–Ala-18, serve as a signal peptide directing secretion. A glycan (N-linked (GlcNAc...) asparagine) is linked at Asn-59.

In Emericella nidulans (strain FGSC A4 / ATCC 38163 / CBS 112.46 / NRRL 194 / M139) (Aspergillus nidulans), this protein is Lactobacillus up-regulated protein (lbuA).